The chain runs to 398 residues: 1-deoxy-D-xylulose 5-phosphate reductoisomerase (398 aa).

NADPH contacts are provided by T10, G11, S12, I13, G36, R37, N38, and N124. Residue K125 coordinates 1-deoxy-D-xylulose 5-phosphate. E126 provides a ligand contact to NADPH. D150 is a binding site for Mn(2+). Positions 151, 152, 186, and 209 each coordinate 1-deoxy-D-xylulose 5-phosphate. Residue E152 coordinates Mn(2+). Residue G215 participates in NADPH binding. Residues S222, N227, K228, and E231 each contribute to the 1-deoxy-D-xylulose 5-phosphate site. Mn(2+) is bound at residue E231.

It belongs to the DXR family. In terms of assembly, homodimer. It depends on Mg(2+) as a cofactor. The cofactor is Mn(2+).

It carries out the reaction 2-C-methyl-D-erythritol 4-phosphate + NADP(+) = 1-deoxy-D-xylulose 5-phosphate + NADPH + H(+). Its pathway is isoprenoid biosynthesis; isopentenyl diphosphate biosynthesis via DXP pathway; isopentenyl diphosphate from 1-deoxy-D-xylulose 5-phosphate: step 1/6. Catalyzes the NADPH-dependent rearrangement and reduction of 1-deoxy-D-xylulose-5-phosphate (DXP) to 2-C-methyl-D-erythritol 4-phosphate (MEP). The protein is 1-deoxy-D-xylulose 5-phosphate reductoisomerase of Yersinia pseudotuberculosis serotype IB (strain PB1/+).